We begin with the raw amino-acid sequence, 301 residues long: Ribonuclease Z (301 aa).

Histidine 60, histidine 62, aspartate 64, histidine 65, histidine 137, aspartate 207, and histidine 265 together coordinate Zn(2+). Aspartate 64 acts as the Proton acceptor in catalysis.

The protein belongs to the RNase Z family. In terms of assembly, homodimer. Zn(2+) serves as cofactor.

The catalysed reaction is Endonucleolytic cleavage of RNA, removing extra 3' nucleotides from tRNA precursor, generating 3' termini of tRNAs. A 3'-hydroxy group is left at the tRNA terminus and a 5'-phosphoryl group is left at the trailer molecule.. Functionally, zinc phosphodiesterase, which displays some tRNA 3'-processing endonuclease activity. Probably involved in tRNA maturation, by removing a 3'-trailer from precursor tRNA. In Exiguobacterium sp. (strain ATCC BAA-1283 / AT1b), this protein is Ribonuclease Z.